Here is a 353-residue protein sequence, read N- to C-terminus: Quinolinate synthase (353 aa).

H47 and S68 together coordinate iminosuccinate. C113 contacts [4Fe-4S] cluster. Residues 139–141 (YAN) and S156 contribute to the iminosuccinate site. Position 200 (C200) interacts with [4Fe-4S] cluster. Iminosuccinate-binding positions include 226 to 228 (HPE) and T243. Residue C297 coordinates [4Fe-4S] cluster.

The protein belongs to the quinolinate synthase family. Type 1 subfamily. Requires [4Fe-4S] cluster as cofactor.

The protein resides in the cytoplasm. The enzyme catalyses iminosuccinate + dihydroxyacetone phosphate = quinolinate + phosphate + 2 H2O + H(+). The protein operates within cofactor biosynthesis; NAD(+) biosynthesis; quinolinate from iminoaspartate: step 1/1. Catalyzes the condensation of iminoaspartate with dihydroxyacetone phosphate to form quinolinate. This chain is Quinolinate synthase, found in Vibrio parahaemolyticus serotype O3:K6 (strain RIMD 2210633).